The primary structure comprises 1390 residues: Bromodomain adjacent to zinc finger domain protein 2 (1390 aa).

3 disordered regions span residues 30 to 67 (AKIQKATASSPSKSTNGTSASTSAVPSTSGTSSSQNEA), 178 to 215 (AKKKPAGVASTSSASTSSSTPSTSSASITSSNNNAANN), and 235 to 269 (QKQQQQQKDTQKKADQAKKAKELAKQQQKEQDVKN). A compositionally biased stretch (polar residues) spans 35-45 (ATASSPSKSTN). Composition is skewed to low complexity over residues 46 to 63 (GTSASTSAVPSTSGTSSS) and 186 to 215 (ASTSSASTSSSTPSTSSASITSSNNNAANN). Residues 243–269 (DTQKKADQAKKAKELAKQQQKEQDVKN) are compositionally biased toward basic and acidic residues. The region spanning 323 to 395 (KTNEAMLRLP…DNFLFNTKLV (73 aa)) is the MBD domain. The DDT domain maps to 524–588 (SQGFADALMV…LRLALEFPGM (65 aa)). The segment covering 705–724 (KEEQNHESDSEPPTRPDTPK) has biased composition (basic and acidic residues). The tract at residues 705–729 (KEEQNHESDSEPPTRPDTPKKATVA) is disordered. Residues 1100–1149 (EALCQICKSMDGDEMLVCDGCESGCHMECFRPRMTKVPEGDWFCQRCREE) form a PHD-type zinc finger. A disordered region spans residues 1218-1241 (EERELEDDNHAENGENTKNGHMNG). A Bromo domain is found at 1273–1377 (LPKNMNKELC…KFFQKRWKQL (105 aa)).

It belongs to the WAL family. In terms of assembly, interacts with set-6. In terms of tissue distribution, broadly expressed in the nervous system, including head, body and tail neurons.

It localises to the nucleus. The protein localises to the chromosome. Its function is as follows. Chromatin reader protein, involved in positively modulating the rate of age-related behavioral deterioration. Positively modulates the level of global trimethylated 'Lys-9' of histone H3 (H3K9me3), but not of H3K9me2 or H3K9me1. May repress the expression of mitochondrial function-related genes by occupying their promoter regions, working in concert with histone methyltransferase, set-6. Involved in modulation of the mitochondrial unfolded protein response (UPR). Negatively regulates expression of bas-1, a serotonin (5-HT) and dopamine synthesizing enzyme (DOPA decarboxylase), with aging. Negatively modulates levels of endogenous 5-HT and dopamine with aging. Involved in modulating longevity, probably as a result of enhanced stress resistance via mechanisms related to dietary restriction and mitochondrial function. This is Bromodomain adjacent to zinc finger domain protein 2 from Caenorhabditis elegans.